The sequence spans 304 residues: Glycine--tRNA ligase alpha subunit (304 aa).

This sequence belongs to the class-II aminoacyl-tRNA synthetase family. As to quaternary structure, tetramer of two alpha and two beta subunits.

It is found in the cytoplasm. It catalyses the reaction tRNA(Gly) + glycine + ATP = glycyl-tRNA(Gly) + AMP + diphosphate. In Actinobacillus pleuropneumoniae serotype 3 (strain JL03), this protein is Glycine--tRNA ligase alpha subunit.